The sequence spans 128 residues: Small ribosomal subunit protein eS8 (128 aa).

Residues 1 to 37 are disordered; it reads MGYFQGNDFRKITGGKKGKHRDKRKFELGSPPTETKL. The segment covering 13-23 has biased composition (basic residues); the sequence is TGGKKGKHRDK.

It belongs to the eukaryotic ribosomal protein eS8 family. Part of the 30S ribosomal subunit.

This chain is Small ribosomal subunit protein eS8, found in Sulfurisphaera tokodaii (strain DSM 16993 / JCM 10545 / NBRC 100140 / 7) (Sulfolobus tokodaii).